The chain runs to 500 residues: NAD(P)H-quinone oxidoreductase chain 4, chloroplastic (500 aa).

The next 14 membrane-spanning stretches (helical) occupy residues 4–24, 35–55, 87–107, 113–130, 134–154, 167–187, 211–231, 242–262, 272–292, 305–325, 330–350, 386–406, 416–436, and 462–482; these read FPWLTIIVVFPISAGSLMLFL, YTICICILELLLTTYAFCYNF, IGTILLTGFITTLATLAAFPV, LFHFLMLAMYSGQIGSFS, LLLFFIMWELELIPVYLLLSM, FILYTAGSSIFLLIGVLGISL, ILFYIGFLIAFAVKSPIIPLH, HYSTCMLLAGILLKMGAYGLV, AHSMFSPWLMVVGTIQIIYAA, IAYSSVSHMGFIIIGISSITD, GAILQIISHGFIGAALFFLAG, LALPGMSGFVAELIVFFGIIT, ILIIFVMAIGMILTPIYLLSM, and LFLSISILLPIIGIGIYPDFV.

This sequence belongs to the complex I subunit 4 family.

Its subcellular location is the plastid. It is found in the chloroplast thylakoid membrane. The enzyme catalyses a plastoquinone + NADH + (n+1) H(+)(in) = a plastoquinol + NAD(+) + n H(+)(out). It catalyses the reaction a plastoquinone + NADPH + (n+1) H(+)(in) = a plastoquinol + NADP(+) + n H(+)(out). This Nasturtium officinale (Watercress) protein is NAD(P)H-quinone oxidoreductase chain 4, chloroplastic.